We begin with the raw amino-acid sequence, 270 residues long: Probable septum site-determining protein MinC (270 aa).

A disordered region spans residues 105-129; the sequence is DRRAPSSKAADEAPVQQAEPAAPAA. Over residues 116–129 the composition is skewed to low complexity; sequence EAPVQQAEPAAPAA.

The protein belongs to the MinC family. Interacts with MinD and FtsZ.

Cell division inhibitor that blocks the formation of polar Z ring septums. Rapidly oscillates between the poles of the cell to destabilize FtsZ filaments that have formed before they mature into polar Z rings. Prevents FtsZ polymerization. The chain is Probable septum site-determining protein MinC from Burkholderia pseudomallei (strain 668).